Here is a 183-residue protein sequence, read N- to C-terminus: Probable GTP-binding protein EngB (183 aa).

The 166-residue stretch at 18–183 (DQNEIVFWGR…LSDLVEHFEL (166 aa)) folds into the EngB-type G domain. Residues 26-33 (GRSNVGKS), 52-56 (GRTRL), 70-73 (DLPG), 137-140 (TKID), and 166-168 (VSS) each bind GTP. Mg(2+) contacts are provided by Ser33 and Thr54.

It belongs to the TRAFAC class TrmE-Era-EngA-EngB-Septin-like GTPase superfamily. EngB GTPase family. Mg(2+) serves as cofactor.

Necessary for normal cell division and for the maintenance of normal septation. This chain is Probable GTP-binding protein EngB, found in Metamycoplasma arthritidis (strain 158L3-1) (Mycoplasma arthritidis).